Reading from the N-terminus, the 273-residue chain is Putative methyltransferase Cher3 (273 aa).

The CheR-type methyltransferase domain occupies 1–273 (MTSERNTDIE…VKPQRIFRKS (273 aa)). S-adenosyl-L-methionine-binding positions include serine 76, arginine 80, glutamate 114, aspartate 137, 199–200 (SL), and 215–216 (RN).

The chain is Putative methyltransferase Cher3 (cheR3) from Pseudomonas putida (strain ATCC 47054 / DSM 6125 / CFBP 8728 / NCIMB 11950 / KT2440).